The following is a 433-amino-acid chain: UDP-N-acetylglucosamine 1-carboxyvinyltransferase (433 aa).

34–35 (KN) lines the phosphoenolpyruvate pocket. Arg-104 contacts UDP-N-acetyl-alpha-D-glucosamine. Residue Cys-128 is the Proton donor of the active site. Residue Cys-128 is modified to 2-(S-cysteinyl)pyruvic acid O-phosphothioketal. UDP-N-acetyl-alpha-D-glucosamine contacts are provided by Asp-320 and Ile-342.

The protein belongs to the EPSP synthase family. MurA subfamily.

The protein resides in the cytoplasm. It carries out the reaction phosphoenolpyruvate + UDP-N-acetyl-alpha-D-glucosamine = UDP-N-acetyl-3-O-(1-carboxyvinyl)-alpha-D-glucosamine + phosphate. It functions in the pathway cell wall biogenesis; peptidoglycan biosynthesis. Its function is as follows. Cell wall formation. Adds enolpyruvyl to UDP-N-acetylglucosamine. The protein is UDP-N-acetylglucosamine 1-carboxyvinyltransferase of Synechococcus sp. (strain CC9605).